The following is a 395-amino-acid chain: S-adenosylmethionine synthase (395 aa).

Residue H14 participates in ATP binding. D16 lines the Mg(2+) pocket. Residue E42 coordinates K(+). Positions 55 and 98 each coordinate L-methionine. A flexible loop region spans residues 98-108; the sequence is QSPDIALGVDK. Residues 174–176, 240–241, D249, 255–256, A272, and K276 contribute to the ATP site; these read DGK, RF, and RK. An L-methionine-binding site is contributed by D249. L-methionine is bound at residue K280.

This sequence belongs to the AdoMet synthase family. Homotetramer; dimer of dimers. Mg(2+) is required as a cofactor. Requires K(+) as cofactor.

The protein resides in the cytoplasm. The catalysed reaction is L-methionine + ATP + H2O = S-adenosyl-L-methionine + phosphate + diphosphate. It participates in amino-acid biosynthesis; S-adenosyl-L-methionine biosynthesis; S-adenosyl-L-methionine from L-methionine: step 1/1. Its function is as follows. Catalyzes the formation of S-adenosylmethionine (AdoMet) from methionine and ATP. The overall synthetic reaction is composed of two sequential steps, AdoMet formation and the subsequent tripolyphosphate hydrolysis which occurs prior to release of AdoMet from the enzyme. This is S-adenosylmethionine synthase from Thermotoga maritima (strain ATCC 43589 / DSM 3109 / JCM 10099 / NBRC 100826 / MSB8).